The sequence spans 63 residues: MNFNKIFVFVALILAISLGQSEAGWLKKLGKRIERIGQHTRDATIQGLGIAQQAANVAATARG.

The signal sequence occupies residues 1–23 (MNFNKIFVFVALILAISLGQSEA). Residue Arg62 is modified to Arginine amide.

This sequence belongs to the cecropin family.

It is found in the secreted. Functionally, cecropins have lytic and antibacterial activity against several Gram-positive and Gram-negative bacteria. This is Cecropin-C (CecC) from Drosophila orena (Fruit fly).